A 340-amino-acid chain; its full sequence is MSHHDGSKPYQPRRGPERPPPPAPADDAAAHVAPTVDHLAAVAAEAEAMARFEEEHRALGAEEEYEEEEDELEEEEEEMEEDEDAQHHEGVGGEVAVPMDAEAAAQLDPHGGMLAASGAVQPMASNQLTLSFQGEVYVFDSVSPDKVQAVLLLLGGRELNPGLGSGASSSAPYSKRLNFPHRVASLMRFREKRKERNFDKKIRYSVRKEVALRMQRNRGQFTSSKPKGDEATSELTASDGSPNWGSVEGRPPSAAECHHCGINAKATPMMRRGPDGPRTLCNACGLMWANKGMLRDLSKAPPTPIQVVASVNDGNGSAAAPTTEQEIPAPATVNGHESST.

The segment at 1–88 is disordered; it reads MSHHDGSKPY…MEEDEDAQHH (88 aa). The segment covering 25–47 has biased composition (low complexity); that stretch reads ADDAAAHVAPTVDHLAAVAAEAE. Basic and acidic residues predominate over residues 48–60; the sequence is AMARFEEEHRALG. Residues 61–84 show a composition bias toward acidic residues; sequence AEEEYEEEEDELEEEEEEMEEDED. In terms of domain architecture, Tify spans 121-156; it reads QPMASNQLTLSFQGEVYVFDSVSPDKVQAVLLLLGG. The 43-residue stretch at 182–224 folds into the CCT domain; sequence RVASLMRFREKRKERNFDKKIRYSVRKEVALRMQRNRGQFTSS. The tract at residues 215–253 is disordered; sequence QRNRGQFTSSKPKGDEATSELTASDGSPNWGSVEGRPPS. Over residues 233 to 244 the composition is skewed to polar residues; it reads SELTASDGSPNW. The segment at 257 to 284 adopts a GATA-type zinc-finger fold; the sequence is CHHCGINAKATPMMRRGPDGPRTLCNAC. Positions 313–325 are enriched in polar residues; the sequence is DGNGSAAAPTTEQ. Residues 313 to 340 form a disordered region; that stretch reads DGNGSAAAPTTEQEIPAPATVNGHESST.

Belongs to the type IV zinc-finger family. Class C subfamily.

It localises to the nucleus. In terms of biological role, transcriptional activator that specifically binds 5'-GATA-3' or 5'-GAT-3' motifs within gene promoters. In Oryza sativa subsp. japonica (Rice), this protein is GATA transcription factor 20.